Consider the following 701-residue polypeptide: Polyribonucleotide nucleotidyltransferase (701 aa).

Residues Asp-485 and Asp-491 each contribute to the Mg(2+) site. The 60-residue stretch at 552-611 (PKTQIMSINPDKIRDVIGAGGKVINKIIQDTGVKIDIKEDGTVFVSSTDHNGVNEAIKII) folds into the KH domain. One can recognise an S1 motif domain in the interval 621–689 (GEVYLGKVTK…NQGRINLSRK (69 aa)).

The protein belongs to the polyribonucleotide nucleotidyltransferase family. Mg(2+) is required as a cofactor.

The protein localises to the cytoplasm. The enzyme catalyses RNA(n+1) + phosphate = RNA(n) + a ribonucleoside 5'-diphosphate. Involved in mRNA degradation. Catalyzes the phosphorolysis of single-stranded polyribonucleotides processively in the 3'- to 5'-direction. The sequence is that of Polyribonucleotide nucleotidyltransferase from Clostridium beijerinckii (strain ATCC 51743 / NCIMB 8052) (Clostridium acetobutylicum).